The following is a 517-amino-acid chain: MLEKTAARQIGSCLMRCRTLDTTSPLWTGFSRLSTAPLIHEAREDGSLASQTLPYEAIPTTGRSAWFNLFQFWRKNSFQHMHLAMEENFQNLGPIYREKLGTHNSVNIMLPQDVARLFQSEGIFPRRMTMEAWSKHRELRNHKQGVFLLNGEAWRSDRIILNKEVLSLAGVKKFLPFLDEAAADFVTFMKKRMSKNTRGSLTVDLYADLFRFTLEASSYVLYGQRLGLLEEHPNADTLRFISAVETVLKTTLPLLYYPHQILQLFQTRLWNEHMHAWDVIFEQADRCIQNIYQEYCLGQERGYSGIMAELLLQAELPLDSIKANITELMAGGVDTTAMPLLFTLFELARNPSVQRELREEIRKAEAQNPNDLNQLLNSLPLLKGAIKETLRLYPVGITVQRHLIKDIVLHNYHIPAGTLVQVGLYPMGRSPLLFQDALRYDPARWLKREDTNFKALAFGFGSRQCIGRRIAETEITLFLMHMLKNFQIDTVSKDDIKTVFGFILMPEKPPLLTFRPI.

A mitochondrion-targeting transit peptide spans 1-45 (MLEKTAARQIGSCLMRCRTLDTTSPLWTGFSRLSTAPLIHEARED). Cys-465 serves as a coordination point for heme.

Belongs to the cytochrome P450 family. Heme is required as a cofactor.

It is found in the mitochondrion membrane. The catalysed reaction is a steroid + 2 reduced [adrenodoxin] + O2 + 2 H(+) = an 11beta-hydroxysteroid + 2 oxidized [adrenodoxin] + H2O. Functionally, has 11 beta-hydroxylation, 18-hydroxylation activities and aldosterone synthetic activity. Catalyzes the final steps of glucocorticoid and mineralocorticoid biosynthesis. The chain is Cytochrome P450 11B, mitochondrial (CYP11B) from Aquarana catesbeiana (American bullfrog).